The sequence spans 48 residues: MRVKINLECSECGSNNYLTSKNKSSHPEKIKVPKYCPKERKVTLHVET.

Belongs to the bacterial ribosomal protein bL33 family.

The protein is Large ribosomal subunit protein bL33A of Streptococcus pyogenes serotype M28 (strain MGAS6180).